The following is an 87-amino-acid chain: Large ribosomal subunit protein eL31 (87 aa).

The protein belongs to the eukaryotic ribosomal protein eL31 family.

The polypeptide is Large ribosomal subunit protein eL31 (rpl31e) (Methanocaldococcus jannaschii (strain ATCC 43067 / DSM 2661 / JAL-1 / JCM 10045 / NBRC 100440) (Methanococcus jannaschii)).